The following is a 687-amino-acid chain: Probable ATP-dependent RNA helicase Dbp73D (687 aa).

Disordered stretches follow at residues 1–26 (MELF…TNNE) and 52–87 (TPIL…EEDV). Basic and acidic residues-rich tracts occupy residues 9 to 18 (YTEDLKEQKD) and 54 to 79 (ILEK…EKPL). A Q motif motif is present at residues 160–168 (LFPVQKQVI). Residues 177 to 381 (KPPPFRPRDI…DLRLFQPRLF (205 aa)) enclose the Helicase ATP-binding domain. 190–197 (APTGSGKT) lines the ATP pocket. The DEAD box motif lies at 305–308 (DEAD). A Helicase C-terminal domain is found at 434–583 (TVFALVEKYK…EIHVSPDIEI (150 aa)). Positions 646–675 (IVQSSKKSSETKNSKTKADKTKYQPKETKK) are disordered. The segment covering 652 to 675 (KSSETKNSKTKADKTKYQPKETKK) has biased composition (basic and acidic residues).

It belongs to the DEAD box helicase family. DDX51/DBP6 subfamily. In terms of tissue distribution, expressed in the germline tissue of the ovary.

Its subcellular location is the nucleus. The protein localises to the nucleolus. The enzyme catalyses ATP + H2O = ADP + phosphate + H(+). Functionally, ATP-binding RNA helicase involved in the biogenesis of 60S ribosomal subunits. The chain is Probable ATP-dependent RNA helicase Dbp73D (Dbp73D) from Drosophila melanogaster (Fruit fly).